The chain runs to 156 residues: Endogenous retrovirus group K member 21 Pro protein (156 aa).

The Peptidase A2 domain maps to 21-96; it reads FEGLVDTGAD…IPLNLWGRDL (76 aa). D26 is a catalytic residue. Residues 111 to 156 form the G-patch domain; the sequence is YSPTSQKIMTKMGYIPGKGLGKNEDGIKVPVEAKINQKREGIGYPF.

The protein belongs to the peptidase A2 family. HERV class-II K(HML-2) subfamily. In terms of assembly, active as a homodimer. In terms of processing, autoproteolytically processed at the N-terminus. Expected C-terminal autoprocessing not detected. The sequence shown is that of the processed Pro protein.

It carries out the reaction Processing at the authentic HIV-1 PR recognition site and release of the mature p17 matrix and the p24 capsid protein, as a result of the cleavage of the -SQNY-|-PIVQ- cleavage site.. Functionally, retroviral proteases have roles in the processing of the primary translation products and the maturation of the viral particle. Endogenous Pro proteins may have kept, lost or modified their original function during evolution. The polypeptide is Endogenous retrovirus group K member 21 Pro protein (ERVK-21) (Homo sapiens (Human)).